Reading from the N-terminus, the 150-residue chain is Large ribosomal subunit protein uL13 (150 aa).

The segment at 129-150 (AEHPHAAQQPKPLQLDPAATAQ) is disordered.

The protein belongs to the universal ribosomal protein uL13 family. In terms of assembly, part of the 50S ribosomal subunit.

This protein is one of the early assembly proteins of the 50S ribosomal subunit, although it is not seen to bind rRNA by itself. It is important during the early stages of 50S assembly. This Synechococcus sp. (strain WH7803) protein is Large ribosomal subunit protein uL13.